The sequence spans 417 residues: Serine hydroxymethyltransferase 1 (417 aa).

(6S)-5,6,7,8-tetrahydrofolate is bound by residues Leu-121 and 125–127 (GHL). Residue Lys-230 is modified to N6-(pyridoxal phosphate)lysine. 355–357 (SPF) contacts (6S)-5,6,7,8-tetrahydrofolate.

It belongs to the SHMT family. In terms of assembly, homodimer. It depends on pyridoxal 5'-phosphate as a cofactor.

It is found in the cytoplasm. The catalysed reaction is (6R)-5,10-methylene-5,6,7,8-tetrahydrofolate + glycine + H2O = (6S)-5,6,7,8-tetrahydrofolate + L-serine. It functions in the pathway one-carbon metabolism; tetrahydrofolate interconversion. It participates in amino-acid biosynthesis; glycine biosynthesis; glycine from L-serine: step 1/1. Its function is as follows. Catalyzes the reversible interconversion of serine and glycine with tetrahydrofolate (THF) serving as the one-carbon carrier. This reaction serves as the major source of one-carbon groups required for the biosynthesis of purines, thymidylate, methionine, and other important biomolecules. Also exhibits THF-independent aldolase activity toward beta-hydroxyamino acids, producing glycine and aldehydes, via a retro-aldol mechanism. In Pseudomonas aeruginosa (strain ATCC 15692 / DSM 22644 / CIP 104116 / JCM 14847 / LMG 12228 / 1C / PRS 101 / PAO1), this protein is Serine hydroxymethyltransferase 1.